The sequence spans 206 residues: FMN-dependent NADH:quinone oxidoreductase (206 aa).

Residues serine 9, 15–17, 95–98, and 139–142 contribute to the FMN site; these read SVS, MYNF, and SRGG.

It belongs to the azoreductase type 1 family. In terms of assembly, homodimer. FMN serves as cofactor.

The enzyme catalyses 2 a quinone + NADH + H(+) = 2 a 1,4-benzosemiquinone + NAD(+). The catalysed reaction is N,N-dimethyl-1,4-phenylenediamine + anthranilate + 2 NAD(+) = 2-(4-dimethylaminophenyl)diazenylbenzoate + 2 NADH + 2 H(+). Functionally, quinone reductase that provides resistance to thiol-specific stress caused by electrophilic quinones. Also exhibits azoreductase activity. Catalyzes the reductive cleavage of the azo bond in aromatic azo compounds to the corresponding amines. The protein is FMN-dependent NADH:quinone oxidoreductase of Legionella pneumophila subsp. pneumophila (strain Philadelphia 1 / ATCC 33152 / DSM 7513).